Consider the following 232-residue polypeptide: Ovalbumin-related protein X (232 aa).

It belongs to the serpin family. Ov-serpin subfamily. Expressed in egg white (at protein level).

This Gallus gallus (Chicken) protein is Ovalbumin-related protein X (SERPINB14C).